We begin with the raw amino-acid sequence, 158 residues long: NAD(P)H-quinone oxidoreductase subunit J, chloroplastic (158 aa).

It belongs to the complex I 30 kDa subunit family. NDH is composed of at least 16 different subunits, 5 of which are encoded in the nucleus.

The protein resides in the plastid. It localises to the chloroplast thylakoid membrane. The enzyme catalyses a plastoquinone + NADH + (n+1) H(+)(in) = a plastoquinol + NAD(+) + n H(+)(out). The catalysed reaction is a plastoquinone + NADPH + (n+1) H(+)(in) = a plastoquinol + NADP(+) + n H(+)(out). Its function is as follows. NDH shuttles electrons from NAD(P)H:plastoquinone, via FMN and iron-sulfur (Fe-S) centers, to quinones in the photosynthetic chain and possibly in a chloroplast respiratory chain. The immediate electron acceptor for the enzyme in this species is believed to be plastoquinone. Couples the redox reaction to proton translocation, and thus conserves the redox energy in a proton gradient. This Chloranthus spicatus (Chulantree) protein is NAD(P)H-quinone oxidoreductase subunit J, chloroplastic.